We begin with the raw amino-acid sequence, 491 residues long: Cobyric acid synthase (491 aa).

In terms of domain architecture, GATase cobBQ-type spans 246 to 432; sequence RKLIACPILP…VHGLLADAEL (187 aa). The active-site Nucleophile is Cys328. His424 is an active-site residue.

This sequence belongs to the CobB/CobQ family. CobQ subfamily.

It functions in the pathway cofactor biosynthesis; adenosylcobalamin biosynthesis. Its function is as follows. Catalyzes amidations at positions B, D, E, and G on adenosylcobyrinic A,C-diamide. NH(2) groups are provided by glutamine, and one molecule of ATP is hydrogenolyzed for each amidation. The chain is Cobyric acid synthase from Novosphingobium aromaticivorans (strain ATCC 700278 / DSM 12444 / CCUG 56034 / CIP 105152 / NBRC 16084 / F199).